Here is a 617-residue protein sequence, read N- to C-terminus: Lipoteichoic acid synthase-like YvgJ (617 aa).

At 1 to 10 (MKGTFFHNQR) the chain is on the cytoplasmic side. A helical membrane pass occupies residues 11–31 (FLCFSILFMWIKTYVIYKLGF). Residues 32–41 (DLQIDTLLEE) lie on the Extracellular side of the membrane. The chain crosses the membrane as a helical span at residues 42–62 (LMLLVNPLSFILPLFGIGLFL). Residues 63–68 (KENKQR) lie on the Cytoplasmic side of the membrane. Residues 69-89 (AFLLIANLVLTVILISNTIFY) traverse the membrane as a helical segment. The Extracellular portion of the chain corresponds to 90 to 115 (GFYIDFITIPVLFQASNMSDMGSSVK). Residues 116 to 136 (ELFHPLFIALFVDLVFLLLFA) traverse the membrane as a helical segment. The Cytoplasmic portion of the chain corresponds to 137–153 (RKTKHPQTKAAPHTIKR). The helical transmembrane segment at 154–171 (YYAASCGMLLCTLALAEV) threads the bilayer. At 172 to 617 (QQPKLLAHSF…LNGDLLRFSE (446 aa)) the chain is on the extracellular side. Positions 251 and 293 each coordinate Mn(2+). Residue threonine 293 is part of the active site. Residue histidine 408 coordinates substrate. The Mn(2+) site is built by aspartate 467 and histidine 468.

The protein belongs to the LTA synthase family. In terms of processing, proteolytically cleaved.

It localises to the cell membrane. It is found in the secreted. The chain is Lipoteichoic acid synthase-like YvgJ (yvgJ) from Bacillus subtilis (strain 168).